The sequence spans 293 residues: Lysosomal amino acid transporter 1 homolog (293 aa).

Residues methionine 1 to alanine 37 lie on the Lumenal side of the membrane. N-linked (GlcNAc...) asparagine glycosylation occurs at asparagine 10. The region spanning tryptophan 34–tyrosine 100 is the PQ-loop 1 domain. The chain crosses the membrane as a helical span at residues serine 38–isoleucine 58. Residues lysine 59–serine 71 are Cytoplasmic-facing. Residues leucine 72–alanine 92 form a helical membrane-spanning segment. Over aspartate 93–proline 96 the chain is Lumenal. The helical transmembrane segment at leucine 97–phenylalanine 117 threads the bilayer. The Cytoplasmic portion of the chain corresponds to histidine 118 to serine 126. Residues leucine 127–proline 147 traverse the membrane as a helical segment. Residues leucine 148–valine 182 are Lumenal-facing. Residues valine 183–isoleucine 203 traverse the membrane as a helical segment. Residues serine 191–glutamine 243 enclose the PQ-loop 2 domain. The Cytoplasmic segment spans residues arginine 204 to glycine 214. Residues isoleucine 215–leucine 235 form a helical membrane-spanning segment. At leucine 236–proline 254 the chain is on the lumenal side. A helical membrane pass occupies residues tryptophan 255 to valine 275. Residues tyrosine 276–serine 293 are Cytoplasmic-facing. The Di-leucine motif signature appears at leucine 290–leucine 291.

The protein belongs to the laat-1 family.

The protein localises to the lysosome membrane. Amino acid transporter that specifically mediates the pH-dependent export of the cationic amino acids arginine, histidine and lysine from lysosomes. The polypeptide is Lysosomal amino acid transporter 1 homolog (Slc66a1) (Rattus norvegicus (Rat)).